The chain runs to 584 residues: Adenine deaminase (584 aa).

This sequence belongs to the metallo-dependent hydrolases superfamily. Adenine deaminase family. It depends on Mn(2+) as a cofactor.

The enzyme catalyses adenine + H2O + H(+) = hypoxanthine + NH4(+). This chain is Adenine deaminase, found in Methanococcoides burtonii (strain DSM 6242 / NBRC 107633 / OCM 468 / ACE-M).